A 381-amino-acid polypeptide reads, in one-letter code: 1-deoxy-D-xylulose 5-phosphate reductoisomerase (381 aa).

NADPH is bound by residues Thr11, Gly12, Ser13, Ile14, Asn37, and Asn121. Lys122 provides a ligand contact to 1-deoxy-D-xylulose 5-phosphate. Residue Glu123 participates in NADPH binding. Asp147 serves as a coordination point for Mn(2+). The 1-deoxy-D-xylulose 5-phosphate site is built by Ser148, Glu149, Ser173, and His196. Glu149 provides a ligand contact to Mn(2+). Gly202 contacts NADPH. Positions 209, 214, 215, and 218 each coordinate 1-deoxy-D-xylulose 5-phosphate. Glu218 provides a ligand contact to Mn(2+).

The protein belongs to the DXR family. It depends on Mg(2+) as a cofactor. Requires Mn(2+) as cofactor.

The catalysed reaction is 2-C-methyl-D-erythritol 4-phosphate + NADP(+) = 1-deoxy-D-xylulose 5-phosphate + NADPH + H(+). The protein operates within isoprenoid biosynthesis; isopentenyl diphosphate biosynthesis via DXP pathway; isopentenyl diphosphate from 1-deoxy-D-xylulose 5-phosphate: step 1/6. Its function is as follows. Catalyzes the NADPH-dependent rearrangement and reduction of 1-deoxy-D-xylulose-5-phosphate (DXP) to 2-C-methyl-D-erythritol 4-phosphate (MEP). This is 1-deoxy-D-xylulose 5-phosphate reductoisomerase from Ruminiclostridium cellulolyticum (strain ATCC 35319 / DSM 5812 / JCM 6584 / H10) (Clostridium cellulolyticum).